An 89-amino-acid chain; its full sequence is Small ribosomal subunit protein uS15 (89 aa).

This sequence belongs to the universal ribosomal protein uS15 family. As to quaternary structure, part of the 30S ribosomal subunit. Forms a bridge to the 50S subunit in the 70S ribosome, contacting the 23S rRNA.

One of the primary rRNA binding proteins, it binds directly to 16S rRNA where it helps nucleate assembly of the platform of the 30S subunit by binding and bridging several RNA helices of the 16S rRNA. Functionally, forms an intersubunit bridge (bridge B4) with the 23S rRNA of the 50S subunit in the ribosome. The protein is Small ribosomal subunit protein uS15 of Lacticaseibacillus casei (strain BL23) (Lactobacillus casei).